Here is a 600-residue protein sequence, read N- to C-terminus: Transcription factor rlmA (600 aa).

Positions 1–61 (MGRRKIEIKA…KKLYEFSSCD (61 aa)) constitute an MADS-box domain. Disordered regions lie at residues 71–518 (YYGP…NIET) and 544–600 (GFGR…KSKT). Residues 75–89 (PHEHKGPEDFNGKRD) are compositionally biased toward basic and acidic residues. Residues 151 to 160 (PQPQGASRPS) are compositionally biased toward polar residues. Over residues 222–242 (QPLPPHAIPPHPMPQPVPPHH) the composition is skewed to pro residues. Positions 243-260 (QAPQHLPQHPHPLAQQTP) are enriched in low complexity. Positions 328-339 (HQRSLSSKSRSI) are enriched in polar residues. Over residues 364-384 (PRTESADVKAEAKQNDSKEIK) the composition is skewed to basic and acidic residues. A compositionally biased stretch (pro residues) spans 386 to 397 (PAQPVAPPPPPR). Positions 440 to 452 (RGSATADSSSSTG) are enriched in low complexity. The span at 453-468 (NQTVTPAKANPDTNHS) shows a compositional bias: polar residues. A compositionally biased stretch (pro residues) spans 490-501 (PPNPFARPPPPG). Positions 503 to 515 (ASQNSNAYNSNNN) are enriched in low complexity.

It belongs to the MEF2 family. As to quaternary structure, interacts with hsp90. Phosphorylation during asexual development.

It localises to the nucleus. Its function is as follows. Transcription factor; part of cell wall integrity (CWI) signaling pathway composed of pkcA, the bck1-mkk2-mpka MAPK cascade and the downstream rlmA transcription regulator. The CWI signaling pathway regulates cell wall integrity and pyomelanin formation. CWI also controls oxidative stress response, gliotoxin production, iron adaptation and asexual development. Finally, CWI is constitutively required for A.fumigatus to cope with the temperature increase found in the mammalian lung environment, during infection. Positively regulates the phosphorylation of mpkA. Involved in tolerance to oxidative damage and transcriptional regulation of genes related to oxidative stress adaptation. Directly regulates the expression of regulators of conidiation, including flbB, flbC, brlA, abaA, and rasB, as well as genes involved in cell wall synthesis and remodeling. Specifically associates with the target fumiquinazoline (fmq) cluster genes promoters at conserved motifs (5'-TAWWWWTA-3') during conidiation to supplement mature conidia with fumiquinazoline C. Also controls the DHN-melanin production via binding the promoter of pksP. The sequence is that of Transcription factor rlmA from Aspergillus fumigatus (strain ATCC MYA-4609 / CBS 101355 / FGSC A1100 / Af293) (Neosartorya fumigata).